An 894-amino-acid polypeptide reads, in one-letter code: Alanine--tRNA ligase (894 aa).

Residues H569, H573, C683, and H687 each contribute to the Zn(2+) site.

This sequence belongs to the class-II aminoacyl-tRNA synthetase family. Zn(2+) is required as a cofactor.

The protein resides in the cytoplasm. The enzyme catalyses tRNA(Ala) + L-alanine + ATP = L-alanyl-tRNA(Ala) + AMP + diphosphate. Functionally, catalyzes the attachment of alanine to tRNA(Ala) in a two-step reaction: alanine is first activated by ATP to form Ala-AMP and then transferred to the acceptor end of tRNA(Ala). Also edits incorrectly charged Ser-tRNA(Ala) and Gly-tRNA(Ala) via its editing domain. This is Alanine--tRNA ligase from Chloroflexus aurantiacus (strain ATCC 29366 / DSM 635 / J-10-fl).